Consider the following 497-residue polypeptide: DNA-dependent metalloprotease SPRTN (497 aa).

Methionine 1 carries the N-acetylmethionine modification. One can recognise a SprT-like domain in the interval 46-213 (LQALFLQFND…KTCGGTYIKI (168 aa)). Zn(2+) is bound at residue histidine 112. Glutamate 113 is an active-site residue. Residues histidine 116 and histidine 131 each contribute to the Zn(2+) site. At lysine 231 the chain carries N6-acetyllysine. Residues 254-262 (FSGKGYVLG) carry the SHP-box motif. Position 269 is a phosphoserine (serine 269). Lysine 304 participates in a covalent cross-link: Glycyl lysine isopeptide (Lys-Gly) (interchain with G-Cter in SUMO2). The short motif at 326–333 (QSVLSSYF) is the PIP-box element. A Glycyl lysine isopeptide (Lys-Gly) (interchain with G-Cter in SUMO2); alternate cross-link involves residue lysine 342. Residue lysine 342 forms a Glycyl lysine isopeptide (Lys-Gly) (interchain with G-Cter in ubiquitin); alternate linkage. The interval 344-459 (FRNVNGSPVK…ASAPQSLSSQ (116 aa)) is disordered. Residues 347–356 (VNGSPVKNGT) are compositionally biased toward polar residues. Lysine 362 is covalently cross-linked (Glycyl lysine isopeptide (Lys-Gly) (interchain with G-Cter in SUMO2)). Over residues 383 to 404 (TSKVTAPASATVTSAAGTSATI) the composition is skewed to low complexity. Phosphoserine is present on serine 384. Residues 413–424 (DQFLNKRPRLED) carry the Nuclear localization signal motif. Over residues 420–432 (PRLEDRTALDTIK) the composition is skewed to basic and acidic residues. A Glycyl lysine isopeptide (Lys-Gly) (interchain with G-Cter in SUMO2) cross-link involves residue lysine 432. Positions 442–459 (RSSSQPTAASAPQSLSSQ) are enriched in low complexity. The segment at 462 to 489 (LVNCPVCQGVVVESQINEHLDRCLEGNK) adopts a UBZ4-type zinc-finger fold. Zn(2+) is bound by residues cysteine 465, cysteine 468, histidine 480, and cysteine 484.

Belongs to the Spartan family. In terms of assembly, homodimer. Interacts (VIA PIP-box) with PCNA (when ubiquitinated). Interacts (via its SHP-box) with VCP/p97. Interacts with RAD18. Interacts with KCTD13 and POLD3. Zn(2+) is required as a cofactor. Autocatalytically cleaved in response to double-stranded DNA-binding: autocatalytic cleavage takes place in trans and leads to inactivation. Post-translationally, monoubiquitinated; monoubiquitination promotes exclusion from chromatin. Deubiquitinated by VCPIP1: deubiquitination is required for subsequent acetylation and recruitment to chromatin and DNA damage sites. In terms of processing, acetylated following deubiquitination by VCPIP1, leading to recruitment to chromatin and DNA damage sites. Phosphorylation by CHEK1 promotes recruitment to chromatin.

It is found in the nucleus. The protein resides in the chromosome. DNA-binding activates the protease activity: single-stranded DNA-binding specifically activates ability to cleave covalent DNA-protein cross-links (DPCs). In contrast, double-stranded DNA-binding specifically activates autocatalytic cleavage, and subsequent inactivation. In terms of biological role, DNA-dependent metalloendopeptidase that mediates the proteolytic cleavage of covalent DNA-protein cross-links (DPCs) during DNA synthesis, thereby playing a key role in maintaining genomic integrity. DPCs are highly toxic DNA lesions that interfere with essential chromatin transactions, such as replication and transcription, and which are induced by reactive agents, such as UV light or formaldehyde. Associates with the DNA replication machinery and specifically removes DPCs during DNA synthesis. Catalyzes proteolytic cleavage of the HMCES DNA-protein cross-link following unfolding by the BRIP1/FANCJ helicase. Acts as a pleiotropic protease for DNA-binding proteins cross-linked with DNA, such as TOP1, TOP2A, histones H3 and H4. Mediates degradation of DPCs that are not ubiquitinated, while it is not able to degrade ubiquitinated DPCs. SPRTN activation requires polymerase collision with DPCs followed by helicase bypass of DPCs. Involved in recruitment of VCP/p97 to sites of DNA damage. Also acts as an activator of CHEK1 during normal DNA replication by mediating proteolytic cleavage of CHEK1, thereby promoting CHEK1 removal from chromatin and subsequent activation. Does not activate CHEK1 in response to DNA damage. May also act as a 'reader' of ubiquitinated PCNA: recruited to sites of UV damage and interacts with ubiquitinated PCNA and RAD18, the E3 ubiquitin ligase that monoubiquitinates PCNA. Facilitates chromatin association of RAD18 and is required for efficient PCNA monoubiquitination, promoting a feed-forward loop to enhance PCNA ubiquitination and translesion DNA synthesis. The chain is DNA-dependent metalloprotease SPRTN from Mus musculus (Mouse).